A 343-amino-acid polypeptide reads, in one-letter code: MSDDFEVVRPEEQAGDEKDRDLRPRSLVDFQGQTKAKENLSVFIKAARERGESLDHLFLIGPPGLGKTTLAQITANELGVDFKVTGAPALDKPKDLAGILTTLTERSVFFIDEIHRLKPAIEEMLYIAMEDYELDWIIGQGPGARTVRIPIPPFTLVGATTRAGMVSSPLISRFGIVQRFEFYSHEELASIISRSASILEIEIEKKAAIALARCSRGTPRVANRLLRRMRDFAQVAGKSSIDEMTVAAGLKQLNIDGLGLETYDRQILRSIIENYSGGPVGAETLAISIGESQDTLEDYYEPYLIQSGLLQRTPRGRMVTLKAYEHLGLNPPKLGDGQEGLFD.

Residues 1-23 (MSDDFEVVRPEEQAGDEKDRDLR) form a disordered region. Residues 1-183 (MSDDFEVVRP…FGIVQRFEFY (183 aa)) form a large ATPase domain (RuvB-L) region. ATP is bound by residues L22, R23, G64, K67, T68, T69, 130–132 (EDY), R173, Y183, and R220. A Mg(2+)-binding site is contributed by T68. Residues 184–254 (SHEELASIIS…TVAAGLKQLN (71 aa)) form a small ATPAse domain (RuvB-S) region. Residues 257 to 343 (GLGLETYDRQ…LGDGQEGLFD (87 aa)) are head domain (RuvB-H). 2 residues coordinate DNA: R312 and R317.

Belongs to the RuvB family. As to quaternary structure, homohexamer. Forms an RuvA(8)-RuvB(12)-Holliday junction (HJ) complex. HJ DNA is sandwiched between 2 RuvA tetramers; dsDNA enters through RuvA and exits via RuvB. An RuvB hexamer assembles on each DNA strand where it exits the tetramer. Each RuvB hexamer is contacted by two RuvA subunits (via domain III) on 2 adjacent RuvB subunits; this complex drives branch migration. In the full resolvosome a probable DNA-RuvA(4)-RuvB(12)-RuvC(2) complex forms which resolves the HJ.

It is found in the cytoplasm. It carries out the reaction ATP + H2O = ADP + phosphate + H(+). In terms of biological role, the RuvA-RuvB-RuvC complex processes Holliday junction (HJ) DNA during genetic recombination and DNA repair, while the RuvA-RuvB complex plays an important role in the rescue of blocked DNA replication forks via replication fork reversal (RFR). RuvA specifically binds to HJ cruciform DNA, conferring on it an open structure. The RuvB hexamer acts as an ATP-dependent pump, pulling dsDNA into and through the RuvAB complex. RuvB forms 2 homohexamers on either side of HJ DNA bound by 1 or 2 RuvA tetramers; 4 subunits per hexamer contact DNA at a time. Coordinated motions by a converter formed by DNA-disengaged RuvB subunits stimulates ATP hydrolysis and nucleotide exchange. Immobilization of the converter enables RuvB to convert the ATP-contained energy into a lever motion, pulling 2 nucleotides of DNA out of the RuvA tetramer per ATP hydrolyzed, thus driving DNA branch migration. The RuvB motors rotate together with the DNA substrate, which together with the progressing nucleotide cycle form the mechanistic basis for DNA recombination by continuous HJ branch migration. Branch migration allows RuvC to scan DNA until it finds its consensus sequence, where it cleaves and resolves cruciform DNA. This chain is Holliday junction branch migration complex subunit RuvB, found in Treponema denticola (strain ATCC 35405 / DSM 14222 / CIP 103919 / JCM 8153 / KCTC 15104).